Consider the following 156-residue polypeptide: Regulatory protein RecX (156 aa).

The protein belongs to the RecX family.

It localises to the cytoplasm. Functionally, modulates RecA activity. This chain is Regulatory protein RecX, found in Pseudomonas putida (strain ATCC 47054 / DSM 6125 / CFBP 8728 / NCIMB 11950 / KT2440).